Reading from the N-terminus, the 492-residue chain is Argininosuccinate lyase (492 aa).

Belongs to the lyase 1 family. Argininosuccinate lyase subfamily.

The protein resides in the cytoplasm. The catalysed reaction is 2-(N(omega)-L-arginino)succinate = fumarate + L-arginine. Its pathway is amino-acid biosynthesis; L-arginine biosynthesis; L-arginine from L-ornithine and carbamoyl phosphate: step 3/3. This is Argininosuccinate lyase from Methanoculleus marisnigri (strain ATCC 35101 / DSM 1498 / JR1).